Here is a 142-residue protein sequence, read N- to C-terminus: Large ribosomal subunit protein uL13 (142 aa).

Belongs to the universal ribosomal protein uL13 family. In terms of assembly, part of the 50S ribosomal subunit.

Its function is as follows. This protein is one of the early assembly proteins of the 50S ribosomal subunit, although it is not seen to bind rRNA by itself. It is important during the early stages of 50S assembly. This is Large ribosomal subunit protein uL13 from Syntrophobacter fumaroxidans (strain DSM 10017 / MPOB).